The sequence spans 402 residues: Argininosuccinate synthase (402 aa).

ATP contacts are provided by residues 13–21 (AYSGGLDTS) and Ala40. 2 residues coordinate L-citrulline: Tyr91 and Ser96. Gly121 contacts ATP. Thr123, Asn127, and Asp128 together coordinate L-aspartate. L-citrulline is bound at residue Asn127. Residues Arg131, Ser180, Ser189, Glu265, and Tyr277 each coordinate L-citrulline.

The protein belongs to the argininosuccinate synthase family. Type 1 subfamily. As to quaternary structure, homotetramer.

It localises to the cytoplasm. It catalyses the reaction L-citrulline + L-aspartate + ATP = 2-(N(omega)-L-arginino)succinate + AMP + diphosphate + H(+). It participates in amino-acid biosynthesis; L-arginine biosynthesis; L-arginine from L-ornithine and carbamoyl phosphate: step 2/3. In Leptospira biflexa serovar Patoc (strain Patoc 1 / Ames), this protein is Argininosuccinate synthase.